The primary structure comprises 100 residues: MHLNPAEKEKLQIFLASELLLRRKARGLKLNYPEAVAIITSFIMEGARDGKTVAMLMEEGKHVLTRDDVMEGVPEMIDDIQAEATFPDGTKLVTVHNPIS.

The protein belongs to the urease gamma subunit family. As to quaternary structure, heterotrimer of UreA (gamma), UreB (beta) and UreC (alpha) subunits. Three heterotrimers associate to form the active enzyme. Post-translationally, although not discussed in the published references, Met-1 is represented in the submitted PDB entries as being modified by either a formyl, a carboxyl, or an acetyl group. The N-terminal is probably N-(dihydroxymethyl)methionine, the hydrated form of N-formylmethionine.

The protein localises to the cytoplasm. The enzyme catalyses urea + 2 H2O + H(+) = hydrogencarbonate + 2 NH4(+). The protein operates within nitrogen metabolism; urea degradation; CO(2) and NH(3) from urea (urease route): step 1/1. This Sporosarcina pasteurii (Bacillus pasteurii) protein is Urease subunit gamma.